We begin with the raw amino-acid sequence, 252 residues long: Acyltransferase PGAP2 (252 aa).

Over 1 to 22 the chain is Cytoplasmic; sequence MVPVGPERGANSLFSLRFTTFA. A helical membrane pass occupies residues 23 to 43; sequence VGTVSLPLFAFLFCIVWSLLF. Over 44-77 the chain is Lumenal; sequence NFSETTATHCHVPNYLPSVSAAIGGETPQRYIWR. Residues 78–98 form a helical membrane-spanning segment; that stretch reads LCIGLHSAPRFLVGVAYLHYY. The Cytoplasmic segment spans residues 99–111; the sequence is QGTPCSSPAYPRL. A helical membrane pass occupies residues 112-132; it reads CHLNFLLNCCEIFFLILLTYV. The Lumenal portion of the chain corresponds to 133 to 142; it reads SSSENYEVHK. The chain crosses the membrane as a helical span at residues 143 to 163; sequence LGFMAFMLFSVGYMFVTCSLW. Over 164–184 the chain is Cytoplasmic; sequence RVARKGSGSLEERTSYAWKKR. A helical membrane pass occupies residues 185–205; sequence LFGFYLLMFLSSILVYIWHNM. The Lumenal portion of the chain corresponds to 206-208; that stretch reads YCE. Residues 209 to 229 traverse the membrane as a helical segment; it reads AGVYTVFALLEYLVVLSNMGF. The Cytoplasmic portion of the chain corresponds to 230–252; the sequence is HMTAWWDFGNKELMICSPGDKRI.

It belongs to the PGAP2 family.

It localises to the golgi apparatus membrane. In terms of biological role, involved in the fatty acid remodeling steps of GPI-anchor maturation where the unsaturated acyl chain at sn-2 of inositol phosphate is replaced by a saturated stearoyl chain. May catalyze the second step of the fatty acid remodeling, by reacylating a lyso-GPI intermediate at sn-2 of inositol phosphate by a saturated chain. The fatty acid remodeling steps is critical for the integration of GPI-APs into lipid rafts. The sequence is that of Acyltransferase PGAP2 from Xenopus tropicalis (Western clawed frog).